The primary structure comprises 359 residues: uncharacterized protein (359 aa).

Disordered stretches follow at residues Q90–K117, I132–S161, and T235–R359. Over residues T151 to S161 the composition is skewed to polar residues. Positions K245–P259 are enriched in low complexity. Positions E286–P299 are enriched in basic and acidic residues.

This is an uncharacterized protein from Homo sapiens (Human).